The sequence spans 167 residues: Urease accessory protein UreE (167 aa).

The protein belongs to the UreE family.

Its subcellular location is the cytoplasm. Functionally, involved in urease metallocenter assembly. Binds nickel. Probably functions as a nickel donor during metallocenter assembly. This chain is Urease accessory protein UreE, found in Pseudomonas aeruginosa (strain UCBPP-PA14).